Reading from the N-terminus, the 301-residue chain is Formylmethanofuran--tetrahydromethanopterin formyltransferase (301 aa).

The protein belongs to the FTR family. In terms of assembly, homotetramer.

It is found in the cytoplasm. The catalysed reaction is N-formylmethanofuran + 5,6,7,8-tetrahydromethanopterin + H(+) = N(5)-formyl-5,6,7,8-tetrahydromethanopterin + methanofuran. It functions in the pathway one-carbon metabolism; methanogenesis from CO(2); 5,10-methenyl-5,6,7,8-tetrahydromethanopterin from CO(2): step 2/3. Catalyzes the reversible transfer of a formyl group from formylmethanofuran (formyl-MFR) to tetrahydromethanopterin (H(4)MPT) to produce 5-formyl tetrahydromethanopterin (5-formyl-H(4)MPT) and methanofuran (MFR). This chain is Formylmethanofuran--tetrahydromethanopterin formyltransferase, found in Methanocaldococcus jannaschii (strain ATCC 43067 / DSM 2661 / JAL-1 / JCM 10045 / NBRC 100440) (Methanococcus jannaschii).